We begin with the raw amino-acid sequence, 524 residues long: Probable myosin-binding protein 5 (524 aa).

A helical transmembrane segment spans residues 20–40 (FLIYALLEWILIIILFIDGFL). A GTD-binding domain is found at 299–397 (SILQHLNRQV…ELEAGIEVYR (99 aa)). Positions 462 to 490 (SRKDMLVKEISEITERLNAIESKGELLQQ) form a coiled coil.

The protein resides in the membrane. Its function is as follows. Probable membrane-anchored myosin receptors. In Arabidopsis thaliana (Mouse-ear cress), this protein is Probable myosin-binding protein 5.